A 269-amino-acid polypeptide reads, in one-letter code: Cytolethal distending toxin subunit B (269 aa).

A signal peptide spans 1–18 (MKKYIISLIVFLSFYAQA). Positions 195–210 (REPADLEMNLTVPVRR) match the Nuclear localization signal motif.

As to quaternary structure, heterotrimer of 3 subunits, CdtA, CdtB and CdtC.

It localises to the secreted. In terms of biological role, part of the tripartite complex that is required for the CDT activity. CdtB exhibits a DNA-nicking endonuclease activity, and very probably causes DNA damage in intoxicated cells. This damage induces G2/M cell cycle arrest, chromatin fragmentation, cell distention and nucleus enlargement. This is Cytolethal distending toxin subunit B (cdtB) from Escherichia coli.